The following is a 375-amino-acid chain: Flagellin (375 aa).

Belongs to the bacterial flagellin family.

The protein localises to the secreted. It localises to the bacterial flagellum. Functionally, flagellin is the subunit protein which polymerizes to form the filaments of bacterial flagella. Flagella are an important component in the invasiveness of B.bacilliformis. In Bartonella bacilliformis, this protein is Flagellin.